A 60-amino-acid polypeptide reads, in one-letter code: uncharacterized protein (60 aa).

The helical transmembrane segment at 27–49 (YYWLVSTARMVLGVTILILILIG) threads the bilayer.

The protein localises to the membrane. This is an uncharacterized protein from Archaeoglobus fulgidus (strain ATCC 49558 / DSM 4304 / JCM 9628 / NBRC 100126 / VC-16).